The primary structure comprises 341 residues: HTH-type transcriptional repressor PurR (341 aa).

The region spanning 2–56 is the HTH lacI-type domain; that stretch reads ATIKDVAKRANVSTTTVSHVINKTRFVAEETRNAVWAAIKELHYSPSAVARSLKV. Residues 4–23 constitute a DNA-binding region (H-T-H motif); that stretch reads IKDVAKRANVSTTTVSHVIN. The DNA-binding element occupies 48–56; the sequence is SAVARSLKV. Hypoxanthine contacts are provided by Y73, R190, T192, F221, and D275.

As to quaternary structure, homodimer.

It functions in the pathway purine metabolism; purine nucleotide biosynthesis [regulation]. Its function is as follows. Is the main repressor of the genes involved in the de novo synthesis of purine nucleotides, regulating purB, purC, purEK, purF, purHD, purL, purMN and guaBA expression. PurR is allosterically activated to bind its cognate DNA by binding the purine corepressors, hypoxanthine or guanine, thereby effecting transcription repression. The polypeptide is HTH-type transcriptional repressor PurR (Shigella dysenteriae serotype 1 (strain Sd197)).